The primary structure comprises 747 residues: Homeobox-leucine zipper protein GLABRA 2 (747 aa).

A disordered region spans residues 31 to 112; that stretch reads RNASSGSTNP…KKYHRHTTDQ (82 aa). The span at 58-68 shows a compositional bias: polar residues; sequence EMSSENSGPTR. The span at 73–90 shows a compositional bias: acidic residues; that stretch reads EDLEGEDHDDEEEEEEDG. Over residues 97-107 the composition is skewed to basic residues; that stretch reads TNKRKRKKYHR. Positions 101 to 160 form a DNA-binding region, homeobox; it reads KRKKYHRHTTDQIRHMEALFKETPHPDEKQRQQLSKQLGLAPRQVKFWFQNRRTQIKAIQ. Residues 155–223 are a coiled coil; it reads QIKAIQERHE…LDKLRAALGR (69 aa). Positions 250–489 constitute an START domain; it reads FALEKSRIAE…LQLHCERLVF (240 aa).

The protein belongs to the HD-ZIP homeobox family. Class IV subfamily. Interacts with GIR1 and GIR2. Expressed in individual developing trichome cells of the emerging leaf primordia. Expressed in differentiating hairless cells of root epidermis.

Its subcellular location is the nucleus. In terms of biological role, transcription factor involved in the determination of epidermal cell identity. Required for correct morphological development and maturation of trichomes. Regulates the frequency of trichome initiation and determines trichome spacing. Acts as a negative factor for root hair development. Required for ectopic repression of root hair development in a subset of epidermal cells. May suppress hair formation in root epidermis by promoting differentiation into hairless epidermal cells. Directly suppresses the bHLH transcription factor genes, RHD6, RSL1, RSL2, LRL1, and LRL2, which have diverse functions in root hair development. Required for normal development of seed coat mucilage. Involved in the control of seed oil accumulation. Acts as a negative regulator of anthocyanin biosynthesis. May directly repress the expression of some component genes from the MYB-bHLH-WD40 (MBW) transcriptional activator complex. The MBW complex activates the transcription of late biosynthesis genes in the flavonoid pathway, leading to the production of anthocyanins. The protein is Homeobox-leucine zipper protein GLABRA 2 of Arabidopsis thaliana (Mouse-ear cress).